The primary structure comprises 465 residues: Probable Xaa-Pro aminopeptidase pepP (465 aa).

Mn(2+)-binding residues include Asp-263, Asp-274, Glu-397, and Glu-437.

This sequence belongs to the peptidase M24B family. It depends on Mn(2+) as a cofactor.

The catalysed reaction is Release of any N-terminal amino acid, including proline, that is linked to proline, even from a dipeptide or tripeptide.. In terms of biological role, catalyzes the removal of a penultimate prolyl residue from the N-termini of peptides. This is Probable Xaa-Pro aminopeptidase pepP (pepP) from Emericella nidulans (strain FGSC A4 / ATCC 38163 / CBS 112.46 / NRRL 194 / M139) (Aspergillus nidulans).